The following is a 272-amino-acid chain: Shikimate dehydrogenase (NADP(+)) (272 aa).

Shikimate contacts are provided by residues 14-16 (SKS) and Thr61. Lys65 (proton acceptor) is an active-site residue. Glu77 lines the NADP(+) pocket. Residues Asn86 and Asp102 each coordinate shikimate. Residues 126 to 130 (GAGGA), 149 to 154 (NRTVSR), and Met213 contribute to the NADP(+) site. Shikimate is bound at residue Tyr215. Gly237 contacts NADP(+).

This sequence belongs to the shikimate dehydrogenase family. In terms of assembly, homodimer.

It catalyses the reaction shikimate + NADP(+) = 3-dehydroshikimate + NADPH + H(+). The protein operates within metabolic intermediate biosynthesis; chorismate biosynthesis; chorismate from D-erythrose 4-phosphate and phosphoenolpyruvate: step 4/7. In terms of biological role, involved in the biosynthesis of the chorismate, which leads to the biosynthesis of aromatic amino acids. Catalyzes the reversible NADPH linked reduction of 3-dehydroshikimate (DHSA) to yield shikimate (SA). The protein is Shikimate dehydrogenase (NADP(+)) of Shigella flexneri.